The primary structure comprises 132 residues: MLTLYTSPSCTSCRKARAWLQEHEIPFKERNIFSEPLNIEELKAILIMTEDGTEEIISTRSKVFQKLNMDLDELPLQDLLELVQENPGLLRRPIMIDEKRLQVGFNEDEIRRFLPRDVRQLELRQAQLMAGL.

Residues Cys-10 and Cys-13 are joined by a disulfide bond.

This sequence belongs to the ArsC family. Spx subfamily. As to quaternary structure, interacts with the C-terminal domain of the alpha subunit of the RNAP.

The protein localises to the cytoplasm. Global transcriptional regulator that plays a key role in stress response and exerts either positive or negative regulation of genes. Acts by interacting with the C-terminal domain of the alpha subunit of the RNA polymerase (RNAP). This interaction can enhance binding of RNAP to the promoter region of target genes and stimulate their transcription, or block interaction of RNAP with activator. This is Global transcriptional regulator Spx from Enterococcus faecalis (strain ATCC 700802 / V583).